The following is a 512-amino-acid chain: Na(+)/H(+) antiporter NhaB (512 aa).

11 helical membrane passes run 28-48, 52-72, 97-117, 144-164, 201-221, 237-257, 296-330, 347-367, 390-410, 446-466, and 474-494; these read FLII…WLLV, IFTL…LLAI, LLLM…LFIF, FLDA…FYGI, LMMH…VGEP, FFLR…LTCF, LALI…IILA, TEAL…AVII, LFYL…VGSV, ATPN…APLI, and VWMA…CVKF.

Belongs to the NhaB Na(+)/H(+) (TC 2.A.34) antiporter family.

It is found in the cell inner membrane. It catalyses the reaction 2 Na(+)(in) + 3 H(+)(out) = 2 Na(+)(out) + 3 H(+)(in). Functionally, na(+)/H(+) antiporter that extrudes sodium in exchange for external protons. The polypeptide is Na(+)/H(+) antiporter NhaB (Enterobacter sp. (strain 638)).